The chain runs to 65 residues: Large ribosomal subunit protein bL35 (65 aa).

2 disordered regions span residues Met-1–Lys-23 and Gly-29–His-48. The span at Leu-33–Asp-43 shows a compositional bias: basic residues.

The protein belongs to the bacterial ribosomal protein bL35 family.

In Desulfatibacillum aliphaticivorans, this protein is Large ribosomal subunit protein bL35.